A 106-amino-acid polypeptide reads, in one-letter code: UPF0145 protein VCM66_A0911 (106 aa).

This sequence belongs to the UPF0145 family.

This Vibrio cholerae serotype O1 (strain M66-2) protein is UPF0145 protein VCM66_A0911.